A 1851-amino-acid chain; its full sequence is Protein lap4 (1851 aa).

16 LRR repeats span residues 38 to 59 (TLEE…FFRL), 61 to 82 (RLRK…IQNF), 84 to 105 (NLVE…IKHL), 107 to 128 (SLQV…FSQL), 130 to 152 (NLTV…GSLT), 153 to 174 (QLES…ISQL), 176 to 197 (KLKR…LGYL), 199 to 220 (GLHE…LGLL), 222 to 243 (KLTY…ISGL), 245 to 267 (SLTD…AKLS), 268 to 289 (RLTI…LGNC), 291 to 312 (NMQE…IGQM), 314 to 335 (KLNN…IGQC), 337 to 358 (NLGV…LGNC), 360 to 382 (VLHV…VNLQ), and 383 to 403 (LKAV…QPDT). Disordered stretches follow at residues 427–474 (PARD…KDLK), 584–641 (VGGS…VQHL), and 656–719 (SQER…PDNL). Phosphoserine is present on residues S433 and S435. Residues 438-461 (FEEREPSRTVVKFSEEATQEKETP) are compositionally biased toward basic and acidic residues. Residues 471 to 492 (KDLKAKAQKLKVERSRNEEHAN) adopt a coiled-coil conformation. Over residues 589–601 (EVQDDDEQEDEFE) the composition is skewed to acidic residues. Positions 620 to 639 (RPPKLHRRDTPHHLKNKRVQ) are enriched in basic residues. The span at 656 to 672 (SQERNDTTPQHSLSGKV) shows a compositional bias: polar residues. The segment covering 676–686 (IEEEEQLEVEQ) has biased composition (acidic residues). The stretch at 677-693 (EEEEQLEVEQEQQQQQQ) forms a coiled coil. A phosphoserine mark is found at S700, S702, and S705. The 88-residue stretch at 731–818 (EIHIERTAAG…VLVLVVQREV (88 aa)) folds into the PDZ 1 domain. Phosphoserine occurs at positions 834 and 837. One can recognise a PDZ 2 domain in the interval 929-1019 (HTTLIRDQIG…FVRLVLQREY (91 aa)). Phosphoserine occurs at positions 1031 and 1041. A disordered region spans residues 1067 to 1150 (LATTTPTPKP…EAQPSSLRPL (84 aa)). Polar residues-rich tracts occupy residues 1080 to 1097 (ASIS…TNGF) and 1132 to 1149 (GSTT…SLRP). PDZ domains lie at 1239 to 1329 (EVVL…QHDP) and 1336 to 1428 (EVLL…CKGY). The span at 1448-1467 (NSSASCSGGSRQGSRASETG) shows a compositional bias: polar residues. A disordered region spans residues 1448-1485 (NSSASCSGGSRQGSRASETGSELSQSQSVSSLDHEEDE). The segment covering 1468–1478 (SELSQSQSVSS) has biased composition (low complexity). S1475, S1477, and S1478 each carry phosphoserine. Phosphothreonine is present on T1599. A compositionally biased stretch (low complexity) spans 1647-1669 (AESANSAGAPSPAVPASTPGSAP). 2 disordered regions span residues 1647 to 1751 (AESA…KVFS) and 1772 to 1851 (LRRD…VFRS). Residues 1725–1751 (VSDKKRFFESAMEDQHKPTQKTDKVFS) show a composition bias toward basic and acidic residues. Residues 1753–1790 (LSKDEVEKLRQEEERKIATLRRDKNSRLLDAANDNIDK) adopt a coiled-coil conformation. Residues 1807 to 1816 (DDNDDSDQEE) show a composition bias toward acidic residues. A compositionally biased stretch (basic and acidic residues) spans 1831–1851 (HFDDAEDMRNPLDEIEAVFRS).

This sequence belongs to the LAP (LRR and PDZ) protein family. As to expression, during germ band extension, expression of isoform A occurs predominantly in neuroblasts derived from the neuro-ectoderm and later is restricted to CNS neurons and pole cells. Isoform C is strongly expressed in PNS and a subset of CNS neurons. In the adult, expressed in third antennal segment and maxillary palps, major olfactory organs and in Johnstons organ in the second antennal segment. Expression is also observed in cortical regions of the brain. Isoforms expressed in epithelia are coexpressed with dlg1 throughout development.

Its subcellular location is the cytoplasm. It localises to the apicolateral cell membrane. The protein resides in the cell junction. The protein localises to the septate junction. Functionally, required for polarization of the embryonic, imaginal disk and follicular epithelia. Specifically restricts apical membrane determinants to the apical cell surface; acts to exclude crb from the basolateral domain and define adherens junction position. Regulates cellular growth and differentiation; acts as a tumor suppressor. Essential for odor guided behavior. The protein is Protein lap4 of Drosophila melanogaster (Fruit fly).